Here is a 371-residue protein sequence, read N- to C-terminus: tRNA-specific 2-thiouridylase MnmA (371 aa).

ATP contacts are provided by residues Gly-16–Ser-23 and Met-42. An interaction with target base in tRNA region spans residues Asn-102 to Asp-104. Cys-107 acts as the Nucleophile in catalysis. Cys-107 and Cys-204 are joined by a disulfide. Gly-132 provides a ligand contact to ATP. The interaction with tRNA stretch occupies residues Lys-154–Gln-156. The Cysteine persulfide intermediate role is filled by Cys-204. Positions Arg-316–Tyr-317 are interaction with tRNA.

Belongs to the MnmA/TRMU family.

The protein localises to the cytoplasm. The enzyme catalyses S-sulfanyl-L-cysteinyl-[protein] + uridine(34) in tRNA + AH2 + ATP = 2-thiouridine(34) in tRNA + L-cysteinyl-[protein] + A + AMP + diphosphate + H(+). Its function is as follows. Catalyzes the 2-thiolation of uridine at the wobble position (U34) of tRNA, leading to the formation of s(2)U34. The protein is tRNA-specific 2-thiouridylase MnmA of Shewanella piezotolerans (strain WP3 / JCM 13877).